We begin with the raw amino-acid sequence, 224 residues long: Cell division protein SepF (224 aa).

Residues 21 to 78 (DDYYEDDDRGPAPRGYRRPREDRFEDEGYAPRGYDGHPEDRRRDYDEPPAYRAGLAGG) form a disordered region. The segment covering 54–66 (YDGHPEDRRRDYD) has biased composition (basic and acidic residues).

It belongs to the SepF family. Homodimer. Interacts with FtsZ.

It is found in the cytoplasm. In terms of biological role, cell division protein that is part of the divisome complex and is recruited early to the Z-ring. Probably stimulates Z-ring formation, perhaps through the cross-linking of FtsZ protofilaments. Its function overlaps with FtsA. This chain is Cell division protein SepF, found in Mycolicibacterium gilvum (strain PYR-GCK) (Mycobacterium gilvum (strain PYR-GCK)).